A 261-amino-acid chain; its full sequence is Cytochrome c oxidase subunit 3 (261 aa).

The Mitochondrial matrix segment spans residues 1–15 (MTHQTHAYHMVNPSP). A helical membrane pass occupies residues 16 to 34 (WPLTGALSALLMTSGLIMW). Residues 35–40 (FHFNSV) lie on the Mitochondrial intermembrane side of the membrane. A helical membrane pass occupies residues 41–66 (ALLMLGLTTNMLTMYQWWRDVIREST). Over 67 to 72 (FQGHHT) the chain is Mitochondrial matrix. A helical membrane pass occupies residues 73–105 (PNVQKGLRYGMILFIISEVLFFTGFFWAFYHSS). Residues 106–128 (LAPTPELGGCWPPTGIHPLNPLE) lie on the Mitochondrial intermembrane side of the membrane. A helical transmembrane segment spans residues 129–152 (VPLLNTSVLLASGVSITWAHHSLM). Over 153-155 (EGN) the chain is Mitochondrial matrix. A helical transmembrane segment spans residues 156 to 183 (RNHMLQALFITIALGVYFTLLQASEYYE). The Mitochondrial intermembrane segment spans residues 184-190 (APFTISD). The chain crosses the membrane as a helical span at residues 191–223 (GVYGSTFFVATGFHGLHVIIGSTFLIVCFFRQL). At 224 to 232 (KFHFTSSHH) the chain is on the mitochondrial matrix side. A helical membrane pass occupies residues 233–256 (FGFEAAAWYWHFVDVVWLFLYVSI). The Mitochondrial intermembrane segment spans residues 257 to 261 (YWWGS).

It belongs to the cytochrome c oxidase subunit 3 family. In terms of assembly, component of the cytochrome c oxidase (complex IV, CIV), a multisubunit enzyme composed of 14 subunits. The complex is composed of a catalytic core of 3 subunits MT-CO1, MT-CO2 and MT-CO3, encoded in the mitochondrial DNA, and 11 supernumerary subunits COX4I, COX5A, COX5B, COX6A, COX6B, COX6C, COX7A, COX7B, COX7C, COX8 and NDUFA4, which are encoded in the nuclear genome. The complex exists as a monomer or a dimer and forms supercomplexes (SCs) in the inner mitochondrial membrane with NADH-ubiquinone oxidoreductase (complex I, CI) and ubiquinol-cytochrome c oxidoreductase (cytochrome b-c1 complex, complex III, CIII), resulting in different assemblies (supercomplex SCI(1)III(2)IV(1) and megacomplex MCI(2)III(2)IV(2)).

Its subcellular location is the mitochondrion inner membrane. The enzyme catalyses 4 Fe(II)-[cytochrome c] + O2 + 8 H(+)(in) = 4 Fe(III)-[cytochrome c] + 2 H2O + 4 H(+)(out). In terms of biological role, component of the cytochrome c oxidase, the last enzyme in the mitochondrial electron transport chain which drives oxidative phosphorylation. The respiratory chain contains 3 multisubunit complexes succinate dehydrogenase (complex II, CII), ubiquinol-cytochrome c oxidoreductase (cytochrome b-c1 complex, complex III, CIII) and cytochrome c oxidase (complex IV, CIV), that cooperate to transfer electrons derived from NADH and succinate to molecular oxygen, creating an electrochemical gradient over the inner membrane that drives transmembrane transport and the ATP synthase. Cytochrome c oxidase is the component of the respiratory chain that catalyzes the reduction of oxygen to water. Electrons originating from reduced cytochrome c in the intermembrane space (IMS) are transferred via the dinuclear copper A center (CU(A)) of subunit 2 and heme A of subunit 1 to the active site in subunit 1, a binuclear center (BNC) formed by heme A3 and copper B (CU(B)). The BNC reduces molecular oxygen to 2 water molecules using 4 electrons from cytochrome c in the IMS and 4 protons from the mitochondrial matrix. The protein is Cytochrome c oxidase subunit 3 (MT-CO3) of Nanger granti (Grant's gazelle).